A 471-amino-acid chain; its full sequence is Glutamate--tRNA ligase (471 aa).

A 'HIGH' region motif is present at residues 9 to 19 (PSPTGYLHVGG). Positions 98, 100, 125, and 127 each coordinate Zn(2+). A 'KMSKS' region motif is present at residues 237 to 241 (KLSKR). Residue lysine 240 coordinates ATP.

Belongs to the class-I aminoacyl-tRNA synthetase family. Glutamate--tRNA ligase type 1 subfamily. Monomer. It depends on Zn(2+) as a cofactor.

The protein localises to the cytoplasm. The catalysed reaction is tRNA(Glu) + L-glutamate + ATP = L-glutamyl-tRNA(Glu) + AMP + diphosphate. Its function is as follows. Catalyzes the attachment of glutamate to tRNA(Glu) in a two-step reaction: glutamate is first activated by ATP to form Glu-AMP and then transferred to the acceptor end of tRNA(Glu). This Escherichia coli O1:K1 / APEC protein is Glutamate--tRNA ligase.